The primary structure comprises 202 residues: Protein-methionine-sulfoxide reductase heme-binding subunit MsrQ (202 aa).

6 consecutive transmembrane segments (helical) span residues 8-28 (LAVFLGALAVPAWWLYQAWIF), 42-62 (LGLGALVLLLLTLAMTPLQKL), 75-95 (LGLWCFTYVLLHLSAYCVFIL), 110-130 (PYIIVGMLGFVCLFLLAITSN), 147-167 (LVYLILGLGLLHMLWVVRADL), and 169-189 (EWTLYAVVGASLMLLRLPSIA).

Belongs to the MsrQ family. Heterodimer of a catalytic subunit (MsrP) and a heme-binding subunit (MsrQ). The cofactor is FMN. It depends on heme b as a cofactor.

It localises to the cell inner membrane. Functionally, part of the MsrPQ system that repairs oxidized periplasmic proteins containing methionine sulfoxide residues (Met-O), using respiratory chain electrons. Thus protects these proteins from oxidative-stress damage caused by reactive species of oxygen and chlorine generated by the host defense mechanisms. MsrPQ is essential for the maintenance of envelope integrity under bleach stress, rescuing a wide series of structurally unrelated periplasmic proteins from methionine oxidation. MsrQ provides electrons for reduction to the reductase catalytic subunit MsrP, using the quinone pool of the respiratory chain. The protein is Protein-methionine-sulfoxide reductase heme-binding subunit MsrQ of Pseudomonas aeruginosa (strain UCBPP-PA14).